Reading from the N-terminus, the 407-residue chain is Argininosuccinate synthase (407 aa).

ATP contacts are provided by residues 16–24 (AYSGGLDTS) and A44. 2 residues coordinate L-citrulline: Y96 and S101. G126 contacts ATP. L-aspartate contacts are provided by T128, N132, and D133. Residue N132 coordinates L-citrulline. Residues R136, S185, S194, E270, and Y282 each contribute to the L-citrulline site.

Belongs to the argininosuccinate synthase family. Type 1 subfamily. As to quaternary structure, homotetramer.

It localises to the cytoplasm. The catalysed reaction is L-citrulline + L-aspartate + ATP = 2-(N(omega)-L-arginino)succinate + AMP + diphosphate + H(+). Its pathway is amino-acid biosynthesis; L-arginine biosynthesis; L-arginine from L-ornithine and carbamoyl phosphate: step 2/3. The sequence is that of Argininosuccinate synthase from Shewanella amazonensis (strain ATCC BAA-1098 / SB2B).